A 262-amino-acid polypeptide reads, in one-letter code: ATP synthase subunit a (262 aa).

Transmembrane regions (helical) follow at residues 30-50 (ITSLTNIAILFIIGLLVLTIF), 64-84 (WNIVLETWVASILGIVKDQIG), 91-111 (LIYFPLIFTFFSFVFISNILG), 123-143 (ISVTLGLSIAIMIGVTLIGFS), 149-169 (FFSLFVPKGTPLALVPLLVLI), 195-215 (LFGVISMLSVSACMAVSSILL), and 220-240 (IGLPLAVLVVLYGLELLVALL).

Belongs to the ATPase A chain family. F-type ATPases have 2 components, CF(1) - the catalytic core - and CF(0) - the membrane proton channel. CF(1) has five subunits: alpha(3), beta(3), gamma(1), delta(1), epsilon(1). CF(0) has three main subunits: a, b and c.

Its subcellular location is the mitochondrion inner membrane. Its function is as follows. Mitochondrial membrane ATP synthase (F(1)F(0) ATP synthase or Complex V) produces ATP from ADP in the presence of a proton gradient across the membrane which is generated by electron transport complexes of the respiratory chain. F-type ATPases consist of two structural domains, F(1) - containing the extramembraneous catalytic core and F(0) - containing the membrane proton channel, linked together by a central stalk and a peripheral stalk. During catalysis, ATP synthesis in the catalytic domain of F(1) is coupled via a rotary mechanism of the central stalk subunits to proton translocation. Key component of the proton channel; it may play a direct role in the translocation of protons across the membrane. This Allomyces arbusculus (Aquatic fungus) protein is ATP synthase subunit a (ATP6).